A 558-amino-acid chain; its full sequence is Formate--tetrahydrofolate ligase (558 aa).

T66 to T73 serves as a coordination point for ATP.

Belongs to the formate--tetrahydrofolate ligase family.

The catalysed reaction is (6S)-5,6,7,8-tetrahydrofolate + formate + ATP = (6R)-10-formyltetrahydrofolate + ADP + phosphate. Its pathway is one-carbon metabolism; tetrahydrofolate interconversion. This is Formate--tetrahydrofolate ligase from Neisseria gonorrhoeae (strain ATCC 700825 / FA 1090).